The primary structure comprises 89 residues: Chromosomal protein MC1a (89 aa).

Its function is as follows. Protects DNA against thermal denaturation and modulates transcription. This Methanothrix soehngenii (Methanosaeta concilii) protein is Chromosomal protein MC1a.